The following is a 442-amino-acid chain: UDP-N-acetylmuramate--L-alanine ligase (442 aa).

Position 109-115 (109-115 (GAHGKTS)) interacts with ATP.

It belongs to the MurCDEF family.

It is found in the cytoplasm. The catalysed reaction is UDP-N-acetyl-alpha-D-muramate + L-alanine + ATP = UDP-N-acetyl-alpha-D-muramoyl-L-alanine + ADP + phosphate + H(+). The protein operates within cell wall biogenesis; peptidoglycan biosynthesis. Cell wall formation. In Streptococcus pyogenes serotype M3 (strain SSI-1), this protein is UDP-N-acetylmuramate--L-alanine ligase.